The chain runs to 149 residues: Arginine repressor (149 aa).

The protein belongs to the ArgR family.

The protein resides in the cytoplasm. Its pathway is amino-acid biosynthesis; L-arginine biosynthesis [regulation]. Functionally, regulates arginine biosynthesis genes. This chain is Arginine repressor, found in Bacillus velezensis (strain DSM 23117 / BGSC 10A6 / LMG 26770 / FZB42) (Bacillus amyloliquefaciens subsp. plantarum).